Here is a 222-residue protein sequence, read N- to C-terminus: Eukaryotic translation initiation factor 3 subunit K (222 aa).

The PCI domain occupies 46–208; that stretch reads YDLEANLAVL…KIKTKNITEK (163 aa).

It belongs to the eIF-3 subunit K family. In terms of assembly, component of the eukaryotic translation initiation factor 3 (eIF-3) complex. The eIF-3 complex interacts with pix.

The protein resides in the cytoplasm. Its function is as follows. Component of the eukaryotic translation initiation factor 3 (eIF-3) complex, which is involved in protein synthesis of a specialized repertoire of mRNAs and, together with other initiation factors, stimulates binding of mRNA and methionyl-tRNAi to the 40S ribosome. The eIF-3 complex specifically targets and initiates translation of a subset of mRNAs involved in cell proliferation. The chain is Eukaryotic translation initiation factor 3 subunit K from Drosophila grimshawi (Hawaiian fruit fly).